Here is a 99-residue protein sequence, read N- to C-terminus: MDTHEFHKLLIKVVDLFLEDRIKEFELKLNTTLDELEFEELIGKPDSSNSAENNGIFIDEYSYDASENAIKKLFVEYVRQPEFKYTVLSIKGVNDWVRE.

This is an uncharacterized protein from Acidianus hospitalis (AFV-1).